A 179-amino-acid chain; its full sequence is Large ribosomal subunit protein uL6 (179 aa).

The protein belongs to the universal ribosomal protein uL6 family. As to quaternary structure, part of the 50S ribosomal subunit.

This protein binds to the 23S rRNA, and is important in its secondary structure. It is located near the subunit interface in the base of the L7/L12 stalk, and near the tRNA binding site of the peptidyltransferase center. This Mycobacterium avium (strain 104) protein is Large ribosomal subunit protein uL6.